We begin with the raw amino-acid sequence, 228 residues long: MPAFFVTGTDTEIGKTTIAAGLLHAARSAGLSTAAAKPVASGCEPTAQGLRNGDALVLLGQCSLALAYEQVNPLAFAPAIAPHLAAREAGVELSAARLHEAVREVLALQADFTLVEGAGGWRVPLLGRENLSDLARLLALPVVLVVGVRLGCINHALLSAEAILGDGLALVGWVANVVDPATSRLEENLATLAERLPAPCLGRVPRLEEATPAAVAAHLDLRPLGIGL.

Position 12–17 (12–17 (EIGKTT)) interacts with ATP. Position 16 (Thr16) interacts with Mg(2+). Lys37 is a catalytic residue. Position 41 (Ser41) interacts with substrate. ATP is bound by residues Asp54, 116 to 119 (EGAG), and 205 to 207 (PRL). The Mg(2+) site is built by Asp54 and Glu116.

This sequence belongs to the dethiobiotin synthetase family. Homodimer. Mg(2+) serves as cofactor.

The protein resides in the cytoplasm. It carries out the reaction (7R,8S)-7,8-diammoniononanoate + CO2 + ATP = (4R,5S)-dethiobiotin + ADP + phosphate + 3 H(+). Its pathway is cofactor biosynthesis; biotin biosynthesis; biotin from 7,8-diaminononanoate: step 1/2. Its function is as follows. Catalyzes a mechanistically unusual reaction, the ATP-dependent insertion of CO2 between the N7 and N8 nitrogen atoms of 7,8-diaminopelargonic acid (DAPA, also called 7,8-diammoniononanoate) to form a ureido ring. In Pseudomonas aeruginosa (strain LESB58), this protein is ATP-dependent dethiobiotin synthetase BioD.